The following is a 316-amino-acid chain: Very-long-chain 3-oxooacyl-coA reductase let-767 (316 aa).

NADP(+) contacts are provided by residues 52 to 80 and Asp106; that span reads ITGA…VSRT. Ser189 is a binding site for substrate. Tyr202 serves as the catalytic Proton acceptor. Position 206 (Lys206) interacts with NADP(+).

This sequence belongs to the short-chain dehydrogenases/reductases (SDR) family. 17-beta-HSD 3 subfamily.

It catalyses the reaction a very-long-chain (3R)-3-hydroxyacyl-CoA + NADP(+) = a very-long-chain 3-oxoacyl-CoA + NADPH + H(+). The protein operates within lipid metabolism; fatty acid biosynthesis. In terms of biological role, required for branched chain fatty acid synthesis. Catalyzes the reduction of the 3-ketoacyl-CoA intermediate that is formed in each cycle of fatty acid elongation. Very long-chain fatty acids (VLCFAs) serve as precursors for ceramide and sphingolipids. May also be required for sterol hormone production. In Caenorhabditis briggsae, this protein is Very-long-chain 3-oxooacyl-coA reductase let-767.